A 416-amino-acid chain; its full sequence is Gamma-glutamyl phosphate reductase (416 aa).

This sequence belongs to the gamma-glutamyl phosphate reductase family.

The protein localises to the cytoplasm. The catalysed reaction is L-glutamate 5-semialdehyde + phosphate + NADP(+) = L-glutamyl 5-phosphate + NADPH + H(+). The protein operates within amino-acid biosynthesis; L-proline biosynthesis; L-glutamate 5-semialdehyde from L-glutamate: step 2/2. Its function is as follows. Catalyzes the NADPH-dependent reduction of L-glutamate 5-phosphate into L-glutamate 5-semialdehyde and phosphate. The product spontaneously undergoes cyclization to form 1-pyrroline-5-carboxylate. The sequence is that of Gamma-glutamyl phosphate reductase from Salmonella schwarzengrund (strain CVM19633).